The sequence spans 285 residues: ATP synthase gamma chain (285 aa).

It belongs to the ATPase gamma chain family. In terms of assembly, F-type ATPases have 2 components, CF(1) - the catalytic core - and CF(0) - the membrane proton channel. CF(1) has five subunits: alpha(3), beta(3), gamma(1), delta(1), epsilon(1). CF(0) has three main subunits: a, b and c.

The protein localises to the cell inner membrane. In terms of biological role, produces ATP from ADP in the presence of a proton gradient across the membrane. The gamma chain is believed to be important in regulating ATPase activity and the flow of protons through the CF(0) complex. This Protochlamydia amoebophila (strain UWE25) protein is ATP synthase gamma chain.